The following is a 150-amino-acid chain: MARSHDTKGSGGLSQRQLRVGEQVRHALAQVLQRGEIRDDLIERTVISVSEVRMSPDLKIATCFITPLGSADPQAVIKALASHAKFIRGRVAPSLAQMKYMPEFRFRPDTSFDNFSKIDALLRFPEVARDLSHDDDEDGGADEAPRNGDE.

The segment at 131–150 (LSHDDDEDGGADEAPRNGDE) is disordered.

Belongs to the RbfA family. As to quaternary structure, monomer. Binds 30S ribosomal subunits, but not 50S ribosomal subunits or 70S ribosomes.

The protein localises to the cytoplasm. Its function is as follows. One of several proteins that assist in the late maturation steps of the functional core of the 30S ribosomal subunit. Associates with free 30S ribosomal subunits (but not with 30S subunits that are part of 70S ribosomes or polysomes). Required for efficient processing of 16S rRNA. May interact with the 5'-terminal helix region of 16S rRNA. The chain is Ribosome-binding factor A from Brucella melitensis biotype 2 (strain ATCC 23457).